The primary structure comprises 81 residues: Large ribosomal subunit protein eL31 (81 aa).

Belongs to the eukaryotic ribosomal protein eL31 family.

In Methanothermobacter thermautotrophicus (strain ATCC 29096 / DSM 1053 / JCM 10044 / NBRC 100330 / Delta H) (Methanobacterium thermoautotrophicum), this protein is Large ribosomal subunit protein eL31 (rpl31e).